We begin with the raw amino-acid sequence, 669 residues long: uncharacterized protein (669 aa).

The next 6 helical transmembrane spans lie at 39 to 61, 124 to 146, 153 to 175, 190 to 212, 221 to 243, and 263 to 285; these read LCPL…GTSW, ISLW…LISI, GIIY…YALG, GLAF…FFGV, FAPG…QTAL, and IAAG…IRYL. RCK C-terminal domains lie at 316–397 and 398–483; these read AGSL…KLIG and KESD…LGGR. The next 5 membrane-spanning stretches (helical) occupy residues 484–506, 516–538, 558–580, 585–607, and 645–667; these read PILN…GYIF, IPFA…YWRS, IGLN…ESFH, IWVA…VVGI, and VPYP…FAML.

This sequence belongs to the AAE transporter (TC 2.A.81) family.

It localises to the cell membrane. This is an uncharacterized protein from Desulfotalea psychrophila (strain LSv54 / DSM 12343).